The primary structure comprises 438 residues: MSKPIVAMVGRPNVGKSTLFNKLAGKRISIVQDTPGVTRDRVYAESEWLNRKFTMIDTGGIEPESSDIIVKQMRRQAQIAIEMADVIVFVVDGKEGLTAADQEVAQMLRKSKKPVVLVVNKIDRLALEENSYEFYNLGIGDPITISASQGLGLGDMLDEVVKYFNDPSEDEEDDEYIRIAMIGKPNVGKSSLINRLLGEERVIVSNVPGTTRDSIDSYLETEDGKFILVDTAGLRRKSKVKEEIERYSVIRTYAAIEKADVAILVIDAEQGITEQDEKIIGYAHEMNKAIMVVVNKWDLIEKDDKTLSNYQKDLQQKLKFMPYAKYLFISALTGQRVHKILSTAKYCYDNYSKRVSTGLLNDVISKAVLMKEPPVVALKRLKIYYATQVATKPPKFVFFVNDPNLLHFSYGRYLENQLRESFDFDGTGIEIEYRARKE.

EngA-type G domains lie at 4–168 (PIVA…NDPS) and 177–352 (IRIA…DNYS). Residues 10–17 (GRPNVGKS), 57–61 (DTGGI), 120–123 (NKID), 183–190 (GKPNVGKS), 230–234 (DTAGL), and 295–298 (NKWD) contribute to the GTP site. One can recognise a KH-like domain in the interval 353–437 (KRVSTGLLND…GIEIEYRARK (85 aa)).

Belongs to the TRAFAC class TrmE-Era-EngA-EngB-Septin-like GTPase superfamily. EngA (Der) GTPase family. In terms of assembly, associates with the 50S ribosomal subunit.

Functionally, GTPase that plays an essential role in the late steps of ribosome biogenesis. The sequence is that of GTPase Der from Clostridium perfringens (strain ATCC 13124 / DSM 756 / JCM 1290 / NCIMB 6125 / NCTC 8237 / Type A).